The following is a 426-amino-acid chain: MKVLIVGSGGREHAIAWKISQNSKVDKIFAASGNAYNKVIKNCENINLKTSDDILNFAIKEKVDLTIVGSEELLVDGIVDKFQENNLTIFGPNKEAAMLEGSKAFAKDFMQKYGVKTAKYQSFIDKEKAIKYLDKISYPVVIKASGLAAGKGVVIAQNRKEAEETLNDMMTNKVFAAAGDTVVIEEFLDGVEISVLSITDSEVIIPFISAKDHKKISEKETGLNTGGMGVIAPNPYYTKTIEEKFIQNILNPTLKGIKAEKMNFVGIIFFGLMVANGEVYLLEYNMRMGDPETQAVLPLMKSDFLNVINSALNKDLKNIKIDWEDKSACCVVMAAGGYPVKYEKGNFISGLEKFDSNKSDNKIFFAGVKEENDKFYTNGGRVLNVVSIKDSLEKAIEEAYKNVKEISFKDNYYRKDIGTLYVPVKY.

The ATP-grasp domain occupies 107–313 (KDFMQKYGVK…FLNVINSALN (207 aa)). 133-194 (LDKISYPVVI…EEFLDGVEIS (62 aa)) is an ATP binding site. Mg(2+)-binding residues include E283 and N285.

The protein belongs to the GARS family. The cofactor is Mg(2+). Mn(2+) is required as a cofactor.

The enzyme catalyses 5-phospho-beta-D-ribosylamine + glycine + ATP = N(1)-(5-phospho-beta-D-ribosyl)glycinamide + ADP + phosphate + H(+). The protein operates within purine metabolism; IMP biosynthesis via de novo pathway; N(1)-(5-phospho-D-ribosyl)glycinamide from 5-phospho-alpha-D-ribose 1-diphosphate: step 2/2. This chain is Phosphoribosylamine--glycine ligase, found in Fusobacterium nucleatum subsp. nucleatum (strain ATCC 25586 / DSM 15643 / BCRC 10681 / CIP 101130 / JCM 8532 / KCTC 2640 / LMG 13131 / VPI 4355).